Consider the following 144-residue polypeptide: Flagellar assembly factor FliW (144 aa).

This sequence belongs to the FliW family. In terms of assembly, interacts with translational regulator CsrA and flagellin(s).

It is found in the cytoplasm. Its function is as follows. Acts as an anti-CsrA protein, binds CsrA and prevents it from repressing translation of its target genes, one of which is flagellin. Binds to flagellin and participates in the assembly of the flagellum. This Geobacillus sp. (strain WCH70) protein is Flagellar assembly factor FliW.